A 60-amino-acid chain; its full sequence is MSQKTVKVQLVRSLIGTREDHRATVRGLGLRRINSVSELQDTPAVRGMINKVSYLVKVLA.

It belongs to the universal ribosomal protein uL30 family. Part of the 50S ribosomal subunit.

In Cupriavidus necator (strain ATCC 17699 / DSM 428 / KCTC 22496 / NCIMB 10442 / H16 / Stanier 337) (Ralstonia eutropha), this protein is Large ribosomal subunit protein uL30.